A 366-amino-acid polypeptide reads, in one-letter code: tRNA/tmRNA (uracil-C(5))-methyltransferase (366 aa).

Residues Gln-190, Tyr-218, Asn-223, Glu-239, and Asp-299 each contribute to the S-adenosyl-L-methionine site. Cys-324 (nucleophile) is an active-site residue. Glu-358 acts as the Proton acceptor in catalysis.

Belongs to the class I-like SAM-binding methyltransferase superfamily. RNA M5U methyltransferase family. TrmA subfamily.

It catalyses the reaction uridine(54) in tRNA + S-adenosyl-L-methionine = 5-methyluridine(54) in tRNA + S-adenosyl-L-homocysteine + H(+). It carries out the reaction uridine(341) in tmRNA + S-adenosyl-L-methionine = 5-methyluridine(341) in tmRNA + S-adenosyl-L-homocysteine + H(+). Dual-specificity methyltransferase that catalyzes the formation of 5-methyluridine at position 54 (m5U54) in all tRNAs, and that of position 341 (m5U341) in tmRNA (transfer-mRNA). This is tRNA/tmRNA (uracil-C(5))-methyltransferase from Klebsiella pneumoniae (strain 342).